An 821-amino-acid polypeptide reads, in one-letter code: Leucine--tRNA ligase (821 aa).

A 'HIGH' region motif is present at residues 44–54 (PYPSGRIHMGH). The 'KMSKS' region signature appears at 589–593 (KMSKS). Lys592 contributes to the ATP binding site.

Belongs to the class-I aminoacyl-tRNA synthetase family.

The protein localises to the cytoplasm. The enzyme catalyses tRNA(Leu) + L-leucine + ATP = L-leucyl-tRNA(Leu) + AMP + diphosphate. This Campylobacter concisus (strain 13826) protein is Leucine--tRNA ligase.